Reading from the N-terminus, the 361-residue chain is Glycerophosphodiester phosphodiesterase GDPD1, chloroplastic (361 aa).

The transit peptide at 1-53 directs the protein to the chloroplast; it reads MSLKAIHVSEVPSLDHFPENPSLICSSRKANNKFVVVGHRGHGMNMSQSPDLR. Residues 54–323 form the GP-PDE domain; it reads FSALKENSIL…DHVEEITEAV (270 aa).

It belongs to the glycerophosphoryl diester phosphodiesterase family. Requires Mg(2+) as cofactor. As to expression, expressed in roots, shoots, rosette leaves, stems, flowers and siliques.

It localises to the plastid. The protein resides in the chloroplast. The catalysed reaction is a sn-glycero-3-phosphodiester + H2O = an alcohol + sn-glycerol 3-phosphate + H(+). In terms of biological role, hydrolyzes glycerolphosphoglycerol, glycerophosphocholine and glycerophosphoethanolamine in vitro. May be involved in release of inorganic phosphate (Pi) from phospholipids during Pi starvation. The protein is Glycerophosphodiester phosphodiesterase GDPD1, chloroplastic of Arabidopsis thaliana (Mouse-ear cress).